A 336-amino-acid chain; its full sequence is Fructokinase-2 (336 aa).

It belongs to the carbohydrate kinase PfkB family. As to expression, expressed in stem, sheaths, anthers, and panicles (at protein level).

It carries out the reaction D-fructose + ATP = D-fructose 6-phosphate + ADP + H(+). It participates in glycan biosynthesis; starch biosynthesis. Strongly inhibited at high fructose concentration. Its function is as follows. May play an important role in maintaining the flux of carbon towards starch formation in endosperm. May also be involved in a sugar-sensing pathway. The chain is Fructokinase-2 (FRK2) from Oryza sativa subsp. japonica (Rice).